The primary structure comprises 178 residues: Large ribosomal subunit protein eL20y (178 aa).

The protein belongs to the eukaryotic ribosomal protein eL20 family.

The protein is Large ribosomal subunit protein eL20y (RPL18AB) of Arabidopsis thaliana (Mouse-ear cress).